Reading from the N-terminus, the 172-residue chain is Caltractin (172 aa).

Positions 1–23 (MQKYGSKKIGATSATSSNKQKVQ) are disordered. The span at 12–21 (TSATSSNKQK) shows a compositional bias: polar residues. 4 consecutive EF-hand domains span residues 29–64 (EQRQ…LGFE), 65–99 (PKKE…KMSE), 101–136 (DSHA…LGEN), and 137–172 (MTDE…TNLF). Ca(2+) is bound by residues aspartate 42, aspartate 44, serine 46, lysine 48, and glutamate 53.

Belongs to the centrin family. In terms of assembly, monomer.

It localises to the cytoplasm. Its subcellular location is the cytoskeleton. It is found in the microtubule organizing center. The protein resides in the centrosome. Plays a fundamental role in microtubule-organizing center structure and function. The protein is Caltractin (CTN) of Naegleria gruberi (Amoeba).